Here is a 132-residue protein sequence, read N- to C-terminus: uncharacterized protein (132 aa).

Positions 1–35 (MSFEYRHYKREAKICTCRGGWAHVLLCIGVSQGAC) are cleaved as a signal peptide. A disordered region spans residues 91–132 (AHPGSHSDQPPGVPSRRKSRLERWSPSVSRSTSPPTEAPFCL). Positions 115-125 (SPSVSRSTSPP) are enriched in low complexity.

The protein resides in the secreted. This is an uncharacterized protein from Homo sapiens (Human).